Here is a 339-residue protein sequence, read N- to C-terminus: Adenylosuccinate synthetase (339 aa).

GTP contacts are provided by residues 12-18 and 42-44; these read GDEGKGS and GHS. Asp-13 functions as the Proton acceptor in the catalytic mechanism. The Mg(2+) site is built by Asp-13 and Gly-42. IMP contacts are provided by residues 13 to 16, 40 to 43, Thr-127, Arg-141, Gln-179, Thr-194, and Arg-256; these read DEGK and NAGH. Catalysis depends on His-43, which acts as the Proton donor. 252–258 lines the substrate pocket; the sequence is TVTGRRR. Residues Arg-258, 284 to 286, and 324 to 326 each bind GTP; these read MLD and KTG.

The protein belongs to the adenylosuccinate synthetase family. In terms of assembly, homodimer. Mg(2+) serves as cofactor.

It is found in the cytoplasm. The enzyme catalyses IMP + L-aspartate + GTP = N(6)-(1,2-dicarboxyethyl)-AMP + GDP + phosphate + 2 H(+). It participates in purine metabolism; AMP biosynthesis via de novo pathway; AMP from IMP: step 1/2. In terms of biological role, plays an important role in the de novo pathway of purine nucleotide biosynthesis. Catalyzes the first committed step in the biosynthesis of AMP from IMP. This is Adenylosuccinate synthetase from Thermococcus sibiricus (strain DSM 12597 / MM 739).